Here is a 480-residue protein sequence, read N- to C-terminus: MGLVIYDTLARRKVPFEPAVPGHVGIYVCGPTVYSDPHLGHARGPVVYDILRRYFLHKGYKVRFVSNITDVGHLTDDADEGEDKIVRRAKLERLEPMEVADKYMWSYFDAMQALNVLRPSIAPRASGHIPEMLELTERLLARGHAYERKGSVYFRVRSFPEYGKLSGKRLEELRAGARVEVREEKEDPLDFALWKAAEPGHIMRWKSPWGEGYPGWHIECTAMSLKYLGEGFDLHAGGIDLQFPHHECEIAQAEAAGFRFARHWMHHNHVLLEGEKMAKSTGNLVLLHDLLEAHEPMALRFYLLQTHYRSPMDFTWEGLESAKRGYGRLLHAYREVRGRKKTAPPGTTPELERALDALEKAFMEAIEDDLSTPEALAALFAFLPELHKLLPEAKAESLARAEAVFHTLGEGILGLFPERVLEERVSGPLLEGLIALLLELREEARRAKDYEKSDLIRERLRALGVIVEDTKEGPRWRLER.

Cysteine 29 serves as a coordination point for Zn(2+). Residues 31-41 (PTVYSDPHLGH) carry the 'HIGH' region motif. The Zn(2+) site is built by cysteine 220, histidine 245, and glutamate 249. Residues 276–280 (KMAKS) carry the 'KMSKS' region motif. Lysine 279 provides a ligand contact to ATP.

Belongs to the class-I aminoacyl-tRNA synthetase family. Monomer. Zn(2+) serves as cofactor.

It localises to the cytoplasm. It carries out the reaction tRNA(Cys) + L-cysteine + ATP = L-cysteinyl-tRNA(Cys) + AMP + diphosphate. In Thermus thermophilus (strain ATCC BAA-163 / DSM 7039 / HB27), this protein is Cysteine--tRNA ligase.